The following is a 263-amino-acid chain: Flagellar L-ring protein (263 aa).

A signal peptide spans 1–15; that stretch reads MKRLLCLLLLTTLTG. Cys16 carries the N-palmitoyl cysteine lipid modification. Cys16 is lipidated: S-diacylglycerol cysteine. Residues 123 to 143 are disordered; sequence KSADAELSKSNDSSMDPLQVG.

Belongs to the FlgH family. In terms of assembly, the basal body constitutes a major portion of the flagellar organelle and consists of four rings (L,P,S, and M) mounted on a central rod.

The protein localises to the cell outer membrane. Its subcellular location is the bacterial flagellum basal body. Assembles around the rod to form the L-ring and probably protects the motor/basal body from shearing forces during rotation. The protein is Flagellar L-ring protein of Aliivibrio fischeri (strain ATCC 700601 / ES114) (Vibrio fischeri).